A 317-amino-acid polypeptide reads, in one-letter code: Heme-binding protein HMX1 (317 aa).

The Cytoplasmic segment spans residues 1–289 (MEDSSNTIIP…FNKDSATRRA (289 aa)). A helical; Anchor for type IV membrane protein transmembrane segment spans residues 290-310 (LHTVMLLVLSIIAIWVLYFLV).

Heme serves as cofactor.

The protein localises to the endoplasmic reticulum membrane. Its function is as follows. Plays an important role in the degradation of heme under conditions of iron deprivation. In Saccharomyces cerevisiae (strain ATCC 204508 / S288c) (Baker's yeast), this protein is Heme-binding protein HMX1 (HMX1).